A 380-amino-acid chain; its full sequence is Protein RecA (380 aa).

Residue 65–72 (GPESSGKT) coordinates ATP. The tract at residues 329 to 380 (DATGEETSETDDQAKEAKDKGTAKNGSKGQSKSTKATPAETALDLGDQPTEK) is disordered. Basic and acidic residues predominate over residues 340 to 350 (DQAKEAKDKGT). Residues 352-364 (KNGSKGQSKSTKA) are compositionally biased toward polar residues.

The protein belongs to the RecA family.

It localises to the cytoplasm. Can catalyze the hydrolysis of ATP in the presence of single-stranded DNA, the ATP-dependent uptake of single-stranded DNA by duplex DNA, and the ATP-dependent hybridization of homologous single-stranded DNAs. It interacts with LexA causing its activation and leading to its autocatalytic cleavage. The polypeptide is Protein RecA (Lactiplantibacillus plantarum (strain ATCC BAA-793 / NCIMB 8826 / WCFS1) (Lactobacillus plantarum)).